A 353-amino-acid chain; its full sequence is MKILGIETSCDETSAAVLSNGSVCSNIVSSQLCHTSFGGVVPELASREHERLIVSIVDSALSEANITKNDLDVIAATAGPGLIGAVMVGLCFGQAMAYALAIPFVPVNHIEAHIFSAFIQETPHHQAPEGDFISLTVSGGHTLLSHVHKDFTYEVIGRTLDDAAGEAFDKTGKMLGLPYPAGPVIDRLAKNGDPFFHEFPRALTAHSQTSKNYRGNSDFSFSGLKTSVLTFLKKQSPEFIEKHLPDIAASVQKAIVSVLVEKTVSAALAGNVKAISIAGGVSANSALRTSMKKACEQHGIAFHVPNAEYSTDNAAMIATLAGLLLAHDLVPRNRYNIAPFASFAAGRRKASLT.

Histidine 109 and histidine 113 together coordinate Fe cation. Substrate is bound by residues 136 to 140, aspartate 169, glycine 182, aspartate 186, and asparagine 284; that span reads TVSGG. Aspartate 312 is a Fe cation binding site.

It belongs to the KAE1 / TsaD family. Requires Fe(2+) as cofactor.

It localises to the cytoplasm. The catalysed reaction is L-threonylcarbamoyladenylate + adenosine(37) in tRNA = N(6)-L-threonylcarbamoyladenosine(37) in tRNA + AMP + H(+). Its function is as follows. Required for the formation of a threonylcarbamoyl group on adenosine at position 37 (t(6)A37) in tRNAs that read codons beginning with adenine. Is involved in the transfer of the threonylcarbamoyl moiety of threonylcarbamoyl-AMP (TC-AMP) to the N6 group of A37, together with TsaE and TsaB. TsaD likely plays a direct catalytic role in this reaction. This chain is tRNA N6-adenosine threonylcarbamoyltransferase, found in Chlorobium phaeobacteroides (strain DSM 266 / SMG 266 / 2430).